Here is a 308-residue protein sequence, read N- to C-terminus: Oligopeptide transport ATP-binding protein AmiF (308 aa).

The 246-residue stretch at 6-251 (VEIKDLEISF…PIHPYTQALL (246 aa)) folds into the ABC transporter domain. Residue 42 to 49 (GESGSGKT) participates in ATP binding.

It belongs to the ABC transporter superfamily.

It is found in the cell membrane. Part of the binding-protein-dependent transport system for oligopeptides. Probably responsible for energy coupling to the transport system. In Streptococcus pneumoniae serotype 4 (strain ATCC BAA-334 / TIGR4), this protein is Oligopeptide transport ATP-binding protein AmiF (amiF).